A 258-amino-acid chain; its full sequence is Indole-3-glycerol phosphate synthase (258 aa).

This sequence belongs to the TrpC family.

The enzyme catalyses 1-(2-carboxyphenylamino)-1-deoxy-D-ribulose 5-phosphate + H(+) = (1S,2R)-1-C-(indol-3-yl)glycerol 3-phosphate + CO2 + H2O. It functions in the pathway amino-acid biosynthesis; L-tryptophan biosynthesis; L-tryptophan from chorismate: step 4/5. This Legionella pneumophila (strain Lens) protein is Indole-3-glycerol phosphate synthase.